The chain runs to 432 residues: Phosphoprotein associated with glycosphingolipid-enriched microdomains 1 (432 aa).

Residues 1 to 16 are Extracellular-facing; it reads MGPAGSLLGSGQMQIT. The helical; Signal-anchor for type III membrane protein transmembrane segment at 17–37 threads the bilayer; the sequence is LWGSLAAVAIFFVITFLIFLC. S-palmitoyl cysteine attachment occurs at residues Cys-37 and Cys-40. The Cytoplasmic portion of the chain corresponds to 38 to 432; the sequence is SSCDREKKPR…LQQGRDITRL (395 aa). A phosphoserine mark is found at Ser-50 and Ser-61. Position 105 is a phosphotyrosine; by LYN (Tyr-105). The segment covering 110–122 has biased composition (polar residues); the sequence is TSASDLLDSQDST. The disordered stretch occupies residues 110 to 137; it reads TSASDLLDSQDSTGKPKCHQSRELPRIP. 3 positions are modified to phosphotyrosine: Tyr-163, Tyr-181, and Tyr-227. Disordered stretches follow at residues 197–230 and 244–432; these read EKGH…YASV and SILG…ITRL. The segment covering 220–230 has biased composition (basic and acidic residues); sequence GKAEFAEYASV. Position 229 is a phosphoserine (Ser-229). Positions 316-356 are enriched in polar residues; that stretch reads MYSSVNKPGQLVNKSGQSLTVPESTYTSIQGDPQRSPSSCN. Tyr-317 bears the Phosphotyrosine; by FYN and LYN mark. Positions 317 to 320 are interaction with CSK; it reads YSSV. The residue at position 354 (Ser-354) is a Phosphoserine. Tyr-359 is subject to Phosphotyrosine. Residue Ser-380 is modified to Phosphoserine. A phosphotyrosine mark is found at Tyr-387 and Tyr-417. The interaction with NHERF1 stretch occupies residues 430–432; that stretch reads TRL.

In terms of assembly, interacts with FYN. When phosphorylated, interacts with CSK. Interacts with NHERF1/EBP50. In resting T-cells, part of a PAG1-NHERF1-MSN complex which is disrupted upon TCR activation. Interacts with LYN on plasma membrane lipid rafts. Identified in a complex with LYN and STAT3. In terms of processing, palmitoylated. Phosphorylated by FYN on Tyr-317 in resting T-cells; which promotes interaction with CSK. Dephosphorylated by PTPRC/CD45 upon TCR activation; which leads to CSK dissociation. May also be dephosphorylated by PTPN11. Hyperphosphorylated in mast cells upon FCER1 activation. Phosphorylated by LYN. In terms of tissue distribution, ubiquitously expressed. Present in germinal center B-cells, plasma cells, T-cells, monocytes and platelets (at protein level).

It is found in the cell membrane. Its function is as follows. Negatively regulates TCR (T-cell antigen receptor)-mediated signaling in T-cells and FCER1 (high affinity immunoglobulin epsilon receptor)-mediated signaling in mast cells. Promotes CSK activation and recruitment to lipid rafts, which results in LCK inhibition. Inhibits immunological synapse formation by preventing dynamic arrangement of lipid raft proteins. May be involved in cell adhesion signaling. The protein is Phosphoprotein associated with glycosphingolipid-enriched microdomains 1 (PAG1) of Homo sapiens (Human).